A 453-amino-acid chain; its full sequence is uncharacterized protein (453 aa).

Topologically, residues 1 to 110 (MIQTQSTAIK…KAILRTFNHP (110 aa)) are cytoplasmic. A helical transmembrane segment spans residues 111–131 (IALTELQFLVSAVLCVGFASI). Over 132–172 (VNLFRLPRLKHTKFSKALNSFPDGILPEYLDGNFRSSILHK) the chain is Lumenal. Residues 173–193 (FLVPSKLVLMTTFPMGIFQFI) form a helical membrane-spanning segment. The Cytoplasmic segment spans residues 194 to 201 (GHITSHKA). Residues 202–222 (VSMIPVSLVHSVKALSPIITV) traverse the membrane as a helical segment. The Lumenal portion of the chain corresponds to 223–234 (GYYKFFEHRYYN). A helical transmembrane segment spans residues 235 to 255 (SMTYYTLLLLIFGVMTTCWST). Residues 256–269 (HGSKRASDNKSGSS) are Cytoplasmic-facing. A helical transmembrane segment spans residues 270-290 (LIGLLFAFISMIIFVAQNIFA). At 291–332 (KNILTIRRKVGILPSSSTDDVTSKEGQPSLDKTRFSPLQVDK) the chain is on the lumenal side. A helical membrane pass occupies residues 333–353 (ITILFYCSCIGFSLTLLPFLT). Over 354-371 (GELMHGGSVINDLTLETV) the chain is Cytoplasmic. Residues 372 to 392 (ALVAIHGIAHFFQAMLAFQLI) form a helical membrane-spanning segment. At 393 to 413 (GLLSSINYSVANIMKRIVVIS) the chain is on the lumenal side. A helical membrane pass occupies residues 414 to 434 (VALFWETKLNFFQVFGVILTI). Residues 435–453 (AGLYGYDKWGLSKKDGRQA) lie on the Cytoplasmic side of the membrane.

This sequence belongs to the TPT transporter family.

It localises to the membrane. In terms of biological role, able to suppress the functional loss of YPT1. May form a channel. Protein SLY41 is not essential for cell viability. The SLY41 gene is a multicopy suppressor. This is an uncharacterized protein from Saccharomyces cerevisiae (strain ATCC 204508 / S288c) (Baker's yeast).